The following is a 224-amino-acid chain: 7-cyano-7-deazaguanine synthase (224 aa).

12–22 (LSGGLDSSTVT) contacts ATP. Zn(2+)-binding residues include cysteine 193, cysteine 201, cysteine 204, and cysteine 207.

It belongs to the QueC family. It depends on Zn(2+) as a cofactor.

It carries out the reaction 7-carboxy-7-deazaguanine + NH4(+) + ATP = 7-cyano-7-deazaguanine + ADP + phosphate + H2O + H(+). It functions in the pathway purine metabolism; 7-cyano-7-deazaguanine biosynthesis. Its function is as follows. Catalyzes the ATP-dependent conversion of 7-carboxy-7-deazaguanine (CDG) to 7-cyano-7-deazaguanine (preQ(0)). The polypeptide is 7-cyano-7-deazaguanine synthase (Prochlorococcus marinus subsp. pastoris (strain CCMP1986 / NIES-2087 / MED4)).